Here is a 656-residue protein sequence, read N- to C-terminus: Acetyl-coenzyme A synthetase (656 aa).

CoA-binding positions include 198–201 (RGGR) and threonine 316. ATP is bound by residues 392–394 (GEP), 416–421 (DTFWQT), aspartate 507, and arginine 522. Serine 530 contributes to the CoA binding site. Arginine 533 is a binding site for ATP. Residues valine 544, histidine 546, and valine 549 each coordinate Mg(2+). Position 591 (arginine 591) interacts with CoA. Lysine 616 bears the N6-acetyllysine mark.

The protein belongs to the ATP-dependent AMP-binding enzyme family. Requires Mg(2+) as cofactor. In terms of processing, acetylated. Deacetylation by the SIR2-homolog deacetylase activates the enzyme.

The enzyme catalyses acetate + ATP + CoA = acetyl-CoA + AMP + diphosphate. Functionally, catalyzes the conversion of acetate into acetyl-CoA (AcCoA), an essential intermediate at the junction of anabolic and catabolic pathways. AcsA undergoes a two-step reaction. In the first half reaction, AcsA combines acetate with ATP to form acetyl-adenylate (AcAMP) intermediate. In the second half reaction, it can then transfer the acetyl group from AcAMP to the sulfhydryl group of CoA, forming the product AcCoA. The protein is Acetyl-coenzyme A synthetase of Rhodobacter capsulatus (strain ATCC BAA-309 / NBRC 16581 / SB1003).